Reading from the N-terminus, the 431-residue chain is Enolase (431 aa).

Q164 is a (2R)-2-phosphoglycerate binding site. The Proton donor role is filled by E206. 3 residues coordinate Mg(2+): D243, E286, and D313. (2R)-2-phosphoglycerate contacts are provided by K338, R367, S368, and K389. The active-site Proton acceptor is K338.

The protein belongs to the enolase family. Requires Mg(2+) as cofactor.

The protein localises to the cytoplasm. It localises to the secreted. Its subcellular location is the cell surface. The catalysed reaction is (2R)-2-phosphoglycerate = phosphoenolpyruvate + H2O. It participates in carbohydrate degradation; glycolysis; pyruvate from D-glyceraldehyde 3-phosphate: step 4/5. In terms of biological role, catalyzes the reversible conversion of 2-phosphoglycerate (2-PG) into phosphoenolpyruvate (PEP). It is essential for the degradation of carbohydrates via glycolysis. The chain is Enolase from Chloroflexus aggregans (strain MD-66 / DSM 9485).